The primary structure comprises 55 residues: Large ribosomal subunit protein bL33A (55 aa).

This sequence belongs to the bacterial ribosomal protein bL33 family.

The chain is Large ribosomal subunit protein bL33A from Rhodococcus jostii (strain RHA1).